The sequence spans 278 residues: Rhomboid protease GlpG (278 aa).

6 helical membrane-spanning segments follow: residues 95–115, 143–163, 170–190, 192–212, 224–241, and 245–267; these read GPLTLGVMALCIVVYILMQIL, AFLHFSLLHITFNLLWWWYLG, LGSGKLFVLAVVSAFFSGWAQ, LFSGALFGGLSGVVYALMGYC, LMLPRGLMVFSVLWLVAG, and ILGMSIANAAHVAGLVLGLLMAF. The active-site Nucleophile is S202. H255 is an active-site residue.

The protein belongs to the peptidase S54 family.

Its subcellular location is the cell inner membrane. The enzyme catalyses Cleaves type-1 transmembrane domains using a catalytic dyad composed of serine and histidine that are contributed by different transmembrane domains.. In terms of biological role, rhomboid-type serine protease that catalyzes intramembrane proteolysis. The sequence is that of Rhomboid protease GlpG from Serratia proteamaculans (strain 568).